The primary structure comprises 875 residues: F-box only protein 41 (875 aa).

3 disordered regions span residues 85–110 (ESTS…HHHH), 165–194 (SSAC…PSPA), and 347–542 (SSSC…PSRS). Positions 170-182 (TPPPGPGPGPCPG) are enriched in pro residues. Residues 183 to 194 (PASASPASPSPA) are compositionally biased toward low complexity. Residues 209 to 351 (ALEKLEVDRR…QLQVISSSCG (143 aa)) adopt a coiled-coil conformation. Polar residues predominate over residues 347–356 (SSSCGSTPSA). The segment covering 359–368 (GRGGGGGGAG) has biased composition (gly residues). Arg-360 bears the Omega-N-methylarginine mark. The span at 395-416 (HGSSPSTGASSRVPAASQSSGC) shows a compositional bias: polar residues. Ser-478 is modified (phosphoserine). Position 479 is a phosphothreonine (Thr-479). One can recognise an F-box domain in the interval 496-540 (SEAEGPLDAPRPGPAMAGPLSSCRLSARPEGGSGRGRRAERVSPS). Ser-762 carries the phosphoserine modification.

Directly interacts with SKP1 and CUL1.

Functionally, substrate-recognition component of the SCF (SKP1-CUL1-F-box protein)-type E3 ubiquitin ligase complex. This chain is F-box only protein 41 (FBXO41), found in Homo sapiens (Human).